Consider the following 391-residue polypeptide: MNIKRNQNNSIDNNLSIDSNPSPIKKVKNHLDFSKSYNEDDEPSNDLDLSFNTSNISNLSNINGEEDNDDDDRENEPKDIDNPNPSITTTTATSTNSTLVKKTNNFLDFNFAFEPNKEEDDEEEDLNISLTTEDILLSQIELLKAEWDYITYNKSPPLVLQSVYHQSNKDSERSIQILKKKGTIRLFQIATSLNDYCIIITTDYIKNIELLKIENTTIPNKIKPETLTNNMKNSSPIKSAPIDTILLKRSEILDLFIKKLIPNFNEVSITRSKLFQLLSIVNDDHHQQENIITHLVQCGLLLQKDDCTFTFSVPGAGGFFLNLMKGRKEILSNIQRLKYKEILKKDLLKKKLKYSNVQMQLLIKDLLGLNKIKIIPTTQGELIRCVQFDEL.

2 stretches are compositionally biased toward low complexity: residues 1–24 (MNIK…PSPI) and 49–63 (LSFN…SNIN). Residues 1–95 (MNIKRNQNNS…SITTTTATST (95 aa)) form a disordered region. Residues 64–74 (GEEDNDDDDRE) are compositionally biased toward acidic residues. The segment covering 82-95 (NPNPSITTTTATST) has biased composition (low complexity).

It belongs to the STK19 family.

Its subcellular location is the nucleus. In terms of biological role, DNA-binding protein which is required for efficient transcription-coupled nucleotide excision repair. The sequence is that of Winged helix repair factor 1 from Dictyostelium discoideum (Social amoeba).